We begin with the raw amino-acid sequence, 239 residues long: Probable transcriptional regulatory protein VC_A0006 (239 aa).

This sequence belongs to the TACO1 family.

The protein localises to the cytoplasm. The polypeptide is Probable transcriptional regulatory protein VC_A0006 (Vibrio cholerae serotype O1 (strain ATCC 39315 / El Tor Inaba N16961)).